Consider the following 669-residue polypeptide: Major S-layer protein (669 aa).

The first 24 residues, 1–24 (MKRFAAVSLAALMLLTVFASAASA), serve as a signal peptide directing secretion. N-linked (GlcNAc...) asparagine glycans are attached at residues Asn36, Asn70, Asn116, Asn600, and Asn607. The tract at residues 588 to 648 (DGEVVDDDED…PTEADGTTPG (61 aa)) is disordered. Residues 590-627 (EVVDDDEDDDNVTEPVDNDTEVEEPTEEPTEGPTEEPT) show a composition bias toward acidic residues. The helical transmembrane segment at 645 to 665 (TTPGFGVVLGLVGLLAVVYLV) threads the bilayer.

Belongs to the Methanosarcinales S-layer protein family. Glycosylated.

It is found in the secreted. The protein resides in the cell wall. Its subcellular location is the S-layer. The protein localises to the cell membrane. Functionally, S-layer protein. The S-layer is a paracrystalline mono-layered assembly of proteins which coat the surface of the cell. The polypeptide is Major S-layer protein (Methanosarcina mazei (strain ATCC BAA-159 / DSM 3647 / Goe1 / Go1 / JCM 11833 / OCM 88) (Methanosarcina frisia)).